We begin with the raw amino-acid sequence, 240 residues long: tRNA pseudouridine synthase A (240 aa).

D50 (nucleophile) is an active-site residue. A substrate-binding site is contributed by Y109.

It belongs to the tRNA pseudouridine synthase TruA family. As to quaternary structure, homodimer.

The catalysed reaction is uridine(38/39/40) in tRNA = pseudouridine(38/39/40) in tRNA. In terms of biological role, formation of pseudouridine at positions 38, 39 and 40 in the anticodon stem and loop of transfer RNAs. The protein is tRNA pseudouridine synthase A of Campylobacter jejuni subsp. jejuni serotype O:6 (strain 81116 / NCTC 11828).